The chain runs to 449 residues: MGVFDYKNLGTEASKTLFADATAITLYTYHNLDNGFAVGYQQHGLGLGCRHTGRGVARQHRLPGSDPPAFPGILTRKRPPWTRCTQPVGRQSSASALGYGGKVDARGTFFGEKAGYTTAQAEVLGKYDDAGKLLEIGIGFRGTSGPRESLITTPCRSGQRPARRAGPQGLCEKLCRRTFGGLLKTVADYAGAHGLSGKDVLVSGHSLGGLAVNSMADLSTSKWAGFYKDANYLAYASPTQSAGDKVLNIGYENDPVFRALDGSTFNLSSLGVHDKAHESTTDNIVSFNDHYASTLWNVLPFSIANLSTWVSHLPSAYGDGMTRVLESGFYEQMTRDSTIILCPTWSDPARANTWVQDLNRNAEPHTGNTFIIGSDGNDLIQGGKGADFIEGGKGNDTIRDNSGHNTFLFSGHFGQDRIIGYQPTGWCSRAPTAAPTCATTRRPWGPIRC.

The N-terminal stretch at 1-23 is a signal peptide; that stretch reads MGVFDYKNLGTEASKTLFADATA. The segment at 58–77 is disordered; sequence RQHRLPGSDPPAFPGILTRK. Ser-206 serves as the catalytic Charge relay system. Residues Gly-318, Asp-387, and Asp-396 each coordinate Ca(2+). Hemolysin-type calcium-binding repeat units lie at residues 372–389 and 390–407; these read IGSD…ADFI and EGGK…HNTF.

This sequence belongs to the AB hydrolase superfamily. Lipase family.

It carries out the reaction a triacylglycerol + H2O = a diacylglycerol + a fatty acid + H(+). This chain is Lipase, found in Pseudomonas fluorescens.